A 334-amino-acid polypeptide reads, in one-letter code: Holliday junction branch migration complex subunit RuvB (334 aa).

Positions 1 to 182 (MDERLVSSEL…FGVLSRLEYY (182 aa)) are large ATPase domain (RuvB-L). ATP contacts are provided by residues L21, R22, G63, K66, T67, T68, 129 to 131 (EDF), R172, Y182, and R219. T67 provides a ligand contact to Mg(2+). Residues 183–253 (TRDELSEIVI…VAVDALERLQ (71 aa)) form a small ATPAse domain (RuvB-S) region. Residues 256–334 (KLGLDHIDRK…HFKMEVPNHD (79 aa)) are head domain (RuvB-H). 2 residues coordinate DNA: R311 and R316.

It belongs to the RuvB family. Homohexamer. Forms an RuvA(8)-RuvB(12)-Holliday junction (HJ) complex. HJ DNA is sandwiched between 2 RuvA tetramers; dsDNA enters through RuvA and exits via RuvB. An RuvB hexamer assembles on each DNA strand where it exits the tetramer. Each RuvB hexamer is contacted by two RuvA subunits (via domain III) on 2 adjacent RuvB subunits; this complex drives branch migration. In the full resolvosome a probable DNA-RuvA(4)-RuvB(12)-RuvC(2) complex forms which resolves the HJ.

Its subcellular location is the cytoplasm. It carries out the reaction ATP + H2O = ADP + phosphate + H(+). The RuvA-RuvB-RuvC complex processes Holliday junction (HJ) DNA during genetic recombination and DNA repair, while the RuvA-RuvB complex plays an important role in the rescue of blocked DNA replication forks via replication fork reversal (RFR). RuvA specifically binds to HJ cruciform DNA, conferring on it an open structure. The RuvB hexamer acts as an ATP-dependent pump, pulling dsDNA into and through the RuvAB complex. RuvB forms 2 homohexamers on either side of HJ DNA bound by 1 or 2 RuvA tetramers; 4 subunits per hexamer contact DNA at a time. Coordinated motions by a converter formed by DNA-disengaged RuvB subunits stimulates ATP hydrolysis and nucleotide exchange. Immobilization of the converter enables RuvB to convert the ATP-contained energy into a lever motion, pulling 2 nucleotides of DNA out of the RuvA tetramer per ATP hydrolyzed, thus driving DNA branch migration. The RuvB motors rotate together with the DNA substrate, which together with the progressing nucleotide cycle form the mechanistic basis for DNA recombination by continuous HJ branch migration. Branch migration allows RuvC to scan DNA until it finds its consensus sequence, where it cleaves and resolves cruciform DNA. The polypeptide is Holliday junction branch migration complex subunit RuvB (Bacillus licheniformis (strain ATCC 14580 / DSM 13 / JCM 2505 / CCUG 7422 / NBRC 12200 / NCIMB 9375 / NCTC 10341 / NRRL NRS-1264 / Gibson 46)).